We begin with the raw amino-acid sequence, 225 residues long: C-reactive protein (225 aa).

The signal sequence occupies residues 1–20; sequence MEKLLWCFLTLVSFSNMSDQ. Residues 24–225 form the Pentraxin (PTX) domain; that stretch reads HKKAFVFPKE…EVHVKPQLWP (202 aa). A disulfide bond links Cys-55 and Cys-116. Ca(2+)-binding residues include Asn-80, Gln-158, Asp-159, and Gln-169.

Belongs to the pentraxin family. Homopentamer. Pentraxin (or pentaxin) have a discoid arrangement of 5 non-covalently bound subunits. Interacts with FCN1; may regulate monocyte activation by FCN1. The cofactor is Ca(2+). As to expression, found in plasma.

The protein localises to the secreted. In terms of biological role, displays several functions associated with host defense: it promotes agglutination, bacterial capsular swelling, phagocytosis and complement fixation through its calcium-dependent binding to phosphorylcholine. Can interact with DNA and histones and may scavenge nuclear material released from damaged circulating cells. The polypeptide is C-reactive protein (CRP) (Oryctolagus cuniculus (Rabbit)).